The sequence spans 307 residues: MMLQGAGLGYRRDLAEDFLLLPDNSVVNFMEVAPENWIKMGGAARYKFDQAAERFPLAVHGLSLSLGGQAPLDKALLQGIKALMTQYQAVFFSEHLSYCECDGHLYDLLPMPFTEEAVKHVAQRIREVQDFLGMQISLENTSYYLHSPTSTMNEVEFLNAIAQEANCGIHLDVNNIYVNGVNHGLLNPYVFLDHVDVSRVNYIHIAGHDEEHGAANPISPSDEAFNKIKGEYRHLPQLLVDTHGEAVKSNVWDLLEYAYQRLPHIPPTLLERDFNFPPFAELYAEVEHIAQLQQKHAKLTVENRHAA.

It belongs to the UPF0276 family.

The polypeptide is UPF0276 protein PM0211 (Pasteurella multocida (strain Pm70)).